We begin with the raw amino-acid sequence, 253 residues long: Complement C1q subcomponent subunit B (253 aa).

The N-terminal stretch at 1–25 is a signal peptide; that stretch reads MKTQWGEVWTHLLLLLLGFLHVSWA. Q26 carries the post-translational modification Pyrrolidone carboxylic acid. The Collagen-like domain occupies 29 to 112; sequence CTGPPGIPGI…GPRGPKGDSG (84 aa). 4-hydroxyproline occurs at positions 33, 36, 39, 51, and 54. A disordered region spans residues 35–115; the sequence is IPGIPGVPGV…GPKGDSGDYG (81 aa). 5-hydroxylysine is present on residues K57 and K60. At P63 the chain carries 4-hydroxyproline. 5-hydroxylysine is present on K75. The span at 78-96 shows a compositional bias: low complexity; sequence PGIPGTPGKVGPKGPVGPK. Residues P81 and P84 each carry the 4-hydroxyproline modification. 5-hydroxylysine occurs at positions 90 and 96. P99 carries the post-translational modification 4-hydroxyproline. K108 carries the post-translational modification 5-hydroxylysine. In terms of domain architecture, C1q spans 115-253; that stretch reads GATQKVAFSA…GFLLFPDMDA (139 aa). A disulfide bridge links C179 with C198. 3 residues coordinate Ca(2+): D199, Y200, and Q206.

Core component of the complement C1 complex, a calcium-dependent complex composed of 1 molecule of the C1Q subcomplex, 2 molecules of C1R and 2 molecules of C1S. The C1Q subcomplex is composed 18 subunits: 3 chains of C1QA, C1QB, and C1QC trimerize to form 6 collagen-like triple helices connected to six globular ligand-recognition modules (C1q domain). Post-translationally, hydroxylated on lysine and proline residues. Hydroxylated lysine residues can be glycosylated. Mouse C1Q contains up to 64.0 hydroxylysine-galactosylglucose residues. Total percentage hydroxylysine residues glycosylated is 95.1%. Contains no hydroxylysine-monosaccharides. As to expression, highest expression in thioglycolate-activated peritoneal macrophages. Also found in spleen, thymus and heart. Very weak expression liver, kidney, lung and intestine.

The protein localises to the secreted. Its subcellular location is the cell surface. Its activity is regulated as follows. The C1Q subcomplex is inhibited by sulfated molecules, such as triterpenoid sulfates, heparan sulfate, or chondroitin sulfates. Functionally, core component of the complement C1 complex, a multiprotein complex that initiates the classical pathway of the complement system, a cascade of proteins that leads to phagocytosis and breakdown of pathogens and signaling that strengthens the adaptive immune system. The classical complement pathway is initiated by the C1Q subcomplex of the C1 complex, which specifically binds IgG or IgM immunoglobulins complexed with antigens, forming antigen-antibody complexes on the surface of pathogens: C1QA, together with C1QB and C1QC, specifically recognizes and binds the Fc regions of IgG or IgM via its C1q domain. Immunoglobulin-binding activates the proenzyme C1R, which cleaves C1S, initiating the proteolytic cascade of the complement system. The C1Q subcomplex is activated by a hexamer of IgG complexed with antigens, while it is activated by a pentameric IgM. The C1Q subcomplex also recognizes and binds phosphatidylserine exposed on the surface of cells undergoing programmed cell death, possibly promoting activation of the complement system. This chain is Complement C1q subcomponent subunit B, found in Mus musculus (Mouse).